The primary structure comprises 708 residues: Leukotoxin translocation ATP-binding protein LktB (708 aa).

The Peptidase C39 domain occupies Met1–Val126. Positions Phe155 to Gln437 constitute an ABC transmembrane type-1 domain. A run of 5 helical transmembrane segments spans residues Leu159–Val179, Leu192–Leu212, Ala270–Tyr290, Leu296–Leu316, and Val389–Gly409. An ABC transporter domain is found at Ile469–Gln704. Gly503–Ser510 is an ATP binding site.

It belongs to the ABC transporter superfamily. Protein-1 exporter (TC 3.A.1.109) family. In terms of assembly, homodimer.

Its subcellular location is the cell inner membrane. It carries out the reaction ATP + H2O + proteinSide 1 = ADP + phosphate + proteinSide 2.. In terms of biological role, part of the ABC transporter complex LktBD involved in leukotoxin export. Transmembrane domains (TMD) form a pore in the inner membrane and the ATP-binding domain (NBD) is responsible for energy generation. The chain is Leukotoxin translocation ATP-binding protein LktB (lktB) from Mannheimia haemolytica (Pasteurella haemolytica).